Here is a 252-residue protein sequence, read N- to C-terminus: Chitooligosaccharide deacetylase (252 aa).

Mg(2+) contacts are provided by H61 and H125.

This sequence belongs to the YdjC deacetylase family. ChbG subfamily. Homodimer. Mg(2+) serves as cofactor.

The protein localises to the cytoplasm. The enzyme catalyses N,N'-diacetylchitobiose + H2O = N-acetyl-beta-D-glucosaminyl-(1-&gt;4)-D-glucosamine + acetate. It carries out the reaction diacetylchitobiose-6'-phosphate + H2O = N'-monoacetylchitobiose-6'-phosphate + acetate. It participates in glycan degradation; chitin degradation. In terms of biological role, involved in the degradation of chitin. ChbG is essential for growth on the acetylated chitooligosaccharides chitobiose and chitotriose but is dispensable for growth on cellobiose and chitosan dimer, the deacetylated form of chitobiose. Deacetylation of chitobiose-6-P and chitotriose-6-P is necessary for both the activation of the chb promoter by the regulatory protein ChbR and the hydrolysis of phosphorylated beta-glucosides by the phospho-beta-glucosidase ChbF. Catalyzes the removal of only one acetyl group from chitobiose-6-P to yield monoacetylchitobiose-6-P, the inducer of ChbR and the substrate of ChbF. In Salmonella paratyphi C (strain RKS4594), this protein is Chitooligosaccharide deacetylase.